A 376-amino-acid polypeptide reads, in one-letter code: Transcription factor Sp6 (376 aa).

The interval 1–70 is disordered; that stretch reads MLTAVCGSLG…VDFSQGYELP (70 aa). The 9aaTAD motif lies at 118-126; sequence GSWWDLHPG. The segment at 164-224 is disordered; the sequence is PPPHPHPHHL…SRRSVPRSSG (61 aa). 3 C2H2-type zinc fingers span residues 254-278, 284-308, and 314-336; these read HNCHIPGCGKAYAKTSHLKAHLRWH, FVCNWLFCGKRFTRSDELQRHLQTH, and FPCAVCSRVFMRSDHLAKHMKTH. The span at 334 to 343 shows a compositional bias: basic and acidic residues; that stretch reads KTHEGAKEEA. Residues 334 to 376 form a disordered region; that stretch reads KTHEGAKEEAAAAAQGEGKAGGVVEPPGGKGKREAEGSSASSN. Over residues 344–360 the composition is skewed to low complexity; the sequence is AAAAQGEGKAGGVVEPP.

Belongs to the Sp1 C2H2-type zinc-finger protein family. In terms of tissue distribution, ubiquitous. Preferentially expressed by proliferating epithelial cells of teeth, hair follicles and limbs.

The protein resides in the nucleus. In terms of biological role, promotes cell proliferation. Plays a role in tooth germ growth. Plays a role in the control of enamel mineralization. Binds the AMBN promoter. The sequence is that of Transcription factor Sp6 (Sp6) from Mus musculus (Mouse).